Here is a 419-residue protein sequence, read N- to C-terminus: Haloacid dehalogenase-like hydrolase domain-containing 5 (419 aa).

The first 15 residues, 1–15, serve as a signal peptide directing secretion; the sequence is MAALAGLGVLGAGRH.

The protein belongs to the HAD-like hydrolase superfamily.

This Mus musculus (Mouse) protein is Haloacid dehalogenase-like hydrolase domain-containing 5.